The chain runs to 533 residues: Ribonuclease III domain-containing protein RNC1, chloroplastic (533 aa).

The N-terminal 30 residues, 1 to 30, are a transit peptide targeting the chloroplast; that stretch reads MAPPAMAFQALALGPLPLPLPAARRRRRVR. Disordered stretches follow at residues 31 to 57 and 66 to 85; these read VLAV…NSPS and RKKA…ILKP. Over residues 39-53 the composition is skewed to pro residues; the sequence is TPPPPPSPSSPPEPA. Positions 69–82 are enriched in basic residues; the sequence is AVSPKKKHPPRRFI. RNase III domains are found at residues 164–279 and 411–511; these read LLYL…LCFG and EHPR…CVYG.

Interacts with RNA. Part of large ribonucleo-protein particles that contain CAF1 and/or CAF2.

Its subcellular location is the plastid. The protein localises to the chloroplast. Binds specific group II introns in chloroplasts and facilitates their splicing. Acts on both subgroup IIA and subgroup IIB introns. The substrates of the subgroup II also require the CRM domain proteins CAF1 or CAF2. Binds both single-stranded and double-stranded RNA non-specifically, but lacks endonuclease activity. Required for plastid ribosome biogenesis. This Oryza sativa subsp. japonica (Rice) protein is Ribonuclease III domain-containing protein RNC1, chloroplastic.